The primary structure comprises 456 residues: Glycosyl hydrolase family 109 protein 2 (456 aa).

A signal peptide (tat-type signal) is located at residues 1-33; sequence MSGFDRRSFLKASMVTAAATALAACASSERATG. NAD(+)-binding positions include 63–64, Asp85, 134–137, 154–155, and Asn183; these read ER, WAWH, and EV. Substrate is bound by residues Tyr212, Arg231, 243-246, and Tyr325; that span reads YPTH. Residue Tyr243 coordinates NAD(+).

Belongs to the Gfo/Idh/MocA family. Glycosyl hydrolase 109 subfamily. Requires NAD(+) as cofactor. Predicted to be exported by the Tat system. The position of the signal peptide cleavage has not been experimentally proven.

Its function is as follows. Glycosidase. The chain is Glycosyl hydrolase family 109 protein 2 from Shewanella sp. (strain ANA-3).